A 99-amino-acid chain; its full sequence is MSTTIRQVMVRGRVQGVGYRAWLAMTAEAQGLEGWVRNRRDGSVEALLAGRETVVAEMISRCRTGPSAAHVDEVIVEEAGQDALNLRYAGERFSILSTL.

One can recognise an Acylphosphatase-like domain in the interval 5–97 (IRQVMVRGRV…YAGERFSILS (93 aa)). Residues Arg20 and Asn38 contribute to the active site.

This sequence belongs to the acylphosphatase family.

The catalysed reaction is an acyl phosphate + H2O = a carboxylate + phosphate + H(+). This chain is Acylphosphatase (acyP), found in Rhodopseudomonas palustris (strain BisB5).